We begin with the raw amino-acid sequence, 400 residues long: Queuine tRNA-ribosyltransferase (400 aa).

Asp93 serves as the catalytic Proton acceptor. Substrate contacts are provided by residues 93 to 97 (DSGGF), Asp166, and Gly247. The tract at residues 277–283 (GIGDVDD) is RNA binding. The Nucleophile role is filled by Asp296. Positions 301–305 (TRLGR) are RNA binding; important for wobble base 34 recognition. Zn(2+) contacts are provided by Cys338, Cys340, Cys343, and His369.

It belongs to the queuine tRNA-ribosyltransferase family. As to quaternary structure, homodimer. Within each dimer, one monomer is responsible for RNA recognition and catalysis, while the other monomer binds to the replacement base PreQ1. The cofactor is Zn(2+).

The catalysed reaction is 7-aminomethyl-7-carbaguanine + guanosine(34) in tRNA = 7-aminomethyl-7-carbaguanosine(34) in tRNA + guanine. It participates in tRNA modification; tRNA-queuosine biosynthesis. Catalyzes the base-exchange of a guanine (G) residue with the queuine precursor 7-aminomethyl-7-deazaguanine (PreQ1) at position 34 (anticodon wobble position) in tRNAs with GU(N) anticodons (tRNA-Asp, -Asn, -His and -Tyr). Catalysis occurs through a double-displacement mechanism. The nucleophile active site attacks the C1' of nucleotide 34 to detach the guanine base from the RNA, forming a covalent enzyme-RNA intermediate. The proton acceptor active site deprotonates the incoming PreQ1, allowing a nucleophilic attack on the C1' of the ribose to form the product. After dissociation, two additional enzymatic reactions on the tRNA convert PreQ1 to queuine (Q), resulting in the hypermodified nucleoside queuosine (7-(((4,5-cis-dihydroxy-2-cyclopenten-1-yl)amino)methyl)-7-deazaguanosine). The polypeptide is Queuine tRNA-ribosyltransferase (Roseiflexus sp. (strain RS-1)).